A 175-amino-acid polypeptide reads, in one-letter code: Inorganic pyrophosphatase (175 aa).

Substrate is bound by residues K30, R44, and Y56. 3 residues coordinate Mg(2+): D66, D71, and D103. Residue Y142 participates in substrate binding.

Belongs to the PPase family. Homohexamer. Requires Mg(2+) as cofactor.

The protein localises to the cytoplasm. The enzyme catalyses diphosphate + H2O = 2 phosphate + H(+). Functionally, catalyzes the hydrolysis of inorganic pyrophosphate (PPi) forming two phosphate ions. This Buchnera aphidicola subsp. Baizongia pistaciae (strain Bp) protein is Inorganic pyrophosphatase.